The primary structure comprises 1237 residues: Cilia- and flagella-associated protein 61 (1237 aa).

Residues 278 to 301 are disordered; it reads QDLSVRRSQDAELRSSSQGSQKIV. Residues 281-290 are compositionally biased toward basic and acidic residues; it reads SVRRSQDAEL.

Component of axonemal radial spokes, the protein complexes that link the outer microtubule doublets with the central pair of microtubules. Interacts with CFAP91/MAATS1, ODAD2/ARMC4, RSPH3A, ROPN1, ROPN1L and RSPH9. Interacts with DYNLT1, DYNC1I2 and TUBB3. Interacts with WDR35, IFT22 and IFT81.

It localises to the cytoplasm. It is found in the cytoskeleton. Its subcellular location is the flagellum axoneme. Involved in sperm flagellum assembly. Plays an essential role in the formation of the radial spokes in flagellum axoneme. The protein is Cilia- and flagella-associated protein 61 of Homo sapiens (Human).